Here is a 151-residue protein sequence, read N- to C-terminus: Large ribosomal subunit protein uL23m (151 aa).

Over residues 120-143 the composition is skewed to basic and acidic residues; the sequence is DDKKSLEDAKKNHKKFLDKNKDRP. The tract at residues 120 to 151 is disordered; the sequence is DDKKSLEDAKKNHKKFLDKNKDRPGTPGWFSI.

It belongs to the universal ribosomal protein uL23 family. As to quaternary structure, component of the mitochondrial ribosome large subunit (39S) which comprises a 16S rRNA and about 50 distinct proteins.

It localises to the mitochondrion. The polypeptide is Large ribosomal subunit protein uL23m (mRpL23) (Anopheles gambiae (African malaria mosquito)).